A 126-amino-acid polypeptide reads, in one-letter code: Fluoride-specific ion channel FluC (126 aa).

A run of 4 helical transmembrane segments spans residues methionine 3–valine 23, threonine 39–tryptophan 59, valine 71–valine 91, and alanine 101–isoleucine 121. Na(+) is bound by residues glycine 75 and threonine 78.

The protein belongs to the fluoride channel Fluc/FEX (TC 1.A.43) family.

Its subcellular location is the cell inner membrane. It catalyses the reaction fluoride(in) = fluoride(out). Na(+) is not transported, but it plays an essential structural role and its presence is essential for fluoride channel function. Its function is as follows. Fluoride-specific ion channel. Important for reducing fluoride concentration in the cell, thus reducing its toxicity. This chain is Fluoride-specific ion channel FluC, found in Rhodospirillum centenum (strain ATCC 51521 / SW).